We begin with the raw amino-acid sequence, 845 residues long: Receptor-like protein Cf-9 homolog (845 aa).

A signal peptide spans 1–19 (MGCVKLVFFMLLKLDLLEF). The segment at 20-70 (KNMFTVNPNASDYCYDYTDQRMQSYPRTLFWNKSTDCCSWDGIHCDETTGQ) is N-cap. The Extracellular segment spans residues 20-794 (KNMFTVNPNA…EEDSPMISWQ (775 aa)). Asparagine 28, asparagine 51, and asparagine 88 each carry an N-linked (GlcNAc...) asparagine glycan. The LRR 1; degenerate repeat unit spans residues 71–94 (VVELDLRCSQLQGKFHSNSSLFQL). LRR repeat units follow at residues 95-118 (SNLKRLDLSFNDFTGSLISPKFGE), 119-143 (FSDLTHLDLSDSNFTGVIPSEISHL), 144-171 (SKLHVLRIHDLNELSLGPHNFELLLKNL), 172-193 (TQLRELNLDSVNISSTIPSNFS), 194-217 (SHLTNLWLPYTELRGVLPERVFHL), 219-242 (DLEFLHLSYNPQLTVRFPTTKWNS), 244-266 (ASLMKLYVHSVNIADRIPESFSH), 267-291 (LTSLHALYMGRCNLSGHIPKPLWNL), 292-316 (TNIESLFLGDNHLEGPIPQLTRFEK), 318-338 (KRLSLGNNNLHGGLEFLSFNR), 340-364 (WTQLEILYFSSNYLTGPIPSNVSGL), 365-388 (QNLGWLFLSSNHLNGSIPSWIFSL), 390-410 (SLVVLDLSNNTFSGKIQEFKS), 411-434 (KTLSTVTLKQNQLEGPIPNSLLNQ), 436-458 (SLQFLLLSHNNISGYISSSICNL), 459-482 (KTLMVLDLGSNNLEGTIPQCVGER), 484-506 (EYLLDLDLSNNRLSGTINTTFSI), 507-531 (GNSFKAISLHGNKLTGKVPRSLINC), 532-554 (KYLKLLDLGNNQLNDTFPNWLGY), 555-579 (LSQLKILSLRSNKLHGPIKSSGSTN), 581-605 (FMRLQILDLSSNGFSGNLPERILGN), 649-672 (LDSNMIINLSKNRFEGHIPSIIGD), 673-696 (LVGLRTLNLSRNALEGHIPASFQN), 698-721 (SVLESLDLSSNRISGEIPQQLASL), and 723-741 (FLEVLNLSHNHLVGCIPKG). 4 N-linked (GlcNAc...) asparagine glycosylation sites follow: asparagine 131, asparagine 170, asparagine 183, and asparagine 191. A glycan (N-linked (GlcNAc...) asparagine) is linked at asparagine 241. 2 N-linked (GlcNAc...) asparagine glycosylation sites follow: asparagine 279 and asparagine 290. 4 N-linked (GlcNAc...) asparagine glycosylation sites follow: asparagine 337, asparagine 360, asparagine 378, and asparagine 398. Asparagine 446 is a glycosylation site (N-linked (GlcNAc...) asparagine). Asparagine 501 carries an N-linked (GlcNAc...) asparagine glycan. Asparagine 545 carries N-linked (GlcNAc...) asparagine glycosylation. 3 N-linked (GlcNAc...) asparagine glycosylation sites follow: asparagine 656, asparagine 680, and asparagine 696. N-linked (GlcNAc...) asparagine glycosylation is found at asparagine 728 and asparagine 749. A C-cap/acidic domain region spans residues 742-794 (KQFDSFGNTSYQGNDGLRGFPLSKLCGVDDQVTTPAELDQEEEEEDSPMISWQ). Residues 795-815 (GVLVGYGCGLVIGLSVIYIMW) form a helical membrane-spanning segment. The Cytoplasmic segment spans residues 816-845 (STQYPAWFSRMDLKLEHIITTRMKKHKKRY).

It belongs to the RLP family.

The protein resides in the cell membrane. Functionally, at the opposite of its homolog Cf-9 found in S.pimpinellifolium, was not able to confer resistance to the fungal pathogen C.fulvum. The sequence is that of Receptor-like protein Cf-9 homolog from Solanum lycopersicum (Tomato).